The following is a 176-amino-acid chain: GTP-dependent dephospho-CoA kinase (176 aa).

Residues Asp47, Val48, Asp66, and Glu125 each coordinate GTP.

This sequence belongs to the GTP-dependent DPCK family.

It catalyses the reaction 3'-dephospho-CoA + GTP = GDP + CoA + H(+). Its pathway is cofactor biosynthesis; coenzyme A biosynthesis. Catalyzes the GTP-dependent phosphorylation of the 3'-hydroxyl group of dephosphocoenzyme A to form coenzyme A (CoA). This chain is GTP-dependent dephospho-CoA kinase, found in Methanocella arvoryzae (strain DSM 22066 / NBRC 105507 / MRE50).